A 419-amino-acid polypeptide reads, in one-letter code: CinA-like protein (419 aa).

Belongs to the CinA family.

The chain is CinA-like protein from Synechococcus sp. (strain CC9902).